A 1016-amino-acid polypeptide reads, in one-letter code: Formate dehydrogenase-O major subunit (1016 aa).

Residues 1–33 constitute a signal peptide (tat-type signal); sequence MQVSRRQFFKICAGGMAGTTAAALGFAPSVALA. Positions 43-106 constitute a 4Fe-4S Mo/W bis-MGD-type domain; the sequence is TRETRNTCTY…GLVDFIHSES (64 aa). C50, C53, C57, and C92 together coordinate [4Fe-4S] cluster. A non-standard amino acid (selenocysteine) is located at residue U196.

The protein belongs to the prokaryotic molybdopterin-containing oxidoreductase family. As to quaternary structure, formate dehydrogenase is a membrane-bound complex, formed by subunits alpha, beta and gamma. It depends on Mo-bis(molybdopterin guanine dinucleotide) as a cofactor. Requires [4Fe-4S] cluster as cofactor. Post-translationally, exported by the Tat system. The position of the signal peptide cleavage has not been experimentally proven.

The protein localises to the periplasm. It carries out the reaction formate + NAD(+) = CO2 + NADH. Allows to use formate as major electron donor during aerobic respiration. Subunit alpha possibly forms the active site. In Escherichia coli (strain K12), this protein is Formate dehydrogenase-O major subunit (fdoG).